The primary structure comprises 87 residues: Large ribosomal subunit protein bL27 (87 aa).

Belongs to the bacterial ribosomal protein bL27 family.

In Stenotrophomonas maltophilia (strain K279a), this protein is Large ribosomal subunit protein bL27.